We begin with the raw amino-acid sequence, 396 residues long: Pyridinium-3,5-bisthiocarboxylic acid mononucleotide nickel insertion protein (396 aa).

It belongs to the LarC family.

It catalyses the reaction Ni(II)-pyridinium-3,5-bisthiocarboxylate mononucleotide = pyridinium-3,5-bisthiocarboxylate mononucleotide + Ni(2+). Functionally, involved in the biosynthesis of a nickel-pincer cofactor ((SCS)Ni(II) pincer complex). Binds Ni(2+), and functions in nickel delivery to pyridinium-3,5-bisthiocarboxylic acid mononucleotide (P2TMN), to form the mature cofactor. Is thus probably required for the activation of nickel-pincer cofactor-dependent enzymes. This Moorella thermoacetica (strain ATCC 39073 / JCM 9320) protein is Pyridinium-3,5-bisthiocarboxylic acid mononucleotide nickel insertion protein.